Here is a 471-residue protein sequence, read N- to C-terminus: GTPase Der (471 aa).

2 EngA-type G domains span residues P3 to S168 and V178 to A353. Residues G9–S16, D56–I60, N120–E123, G184–S191, D231–M235, and N296–D299 contribute to the GTP site. Positions R354–E438 constitute a KH-like domain.

The protein belongs to the TRAFAC class TrmE-Era-EngA-EngB-Septin-like GTPase superfamily. EngA (Der) GTPase family. In terms of assembly, associates with the 50S ribosomal subunit.

In terms of biological role, GTPase that plays an essential role in the late steps of ribosome biogenesis. This is GTPase Der from Symbiobacterium thermophilum (strain DSM 24528 / JCM 14929 / IAM 14863 / T).